Here is a 93-residue protein sequence, read N- to C-terminus: Integration host factor subunit beta (93 aa).

The protein belongs to the bacterial histone-like protein family. Heterodimer of an alpha and a beta chain.

Its function is as follows. This protein is one of the two subunits of integration host factor, a specific DNA-binding protein that functions in genetic recombination as well as in transcriptional and translational control. This chain is Integration host factor subunit beta (ihfB), found in Cereibacter sphaeroides (strain ATCC 17023 / DSM 158 / JCM 6121 / CCUG 31486 / LMG 2827 / NBRC 12203 / NCIMB 8253 / ATH 2.4.1.) (Rhodobacter sphaeroides).